We begin with the raw amino-acid sequence, 542 residues long: CTP synthase (542 aa).

The interval M1–L266 is amidoligase domain. S14 lines the CTP pocket. S14 contacts UTP. ATP is bound by residues S15–I20 and D72. Mg(2+) is bound by residues D72 and E140. CTP is bound by residues D147 to E149, K187 to Q192, and K223. Residues K187–Q192 and K223 contribute to the UTP site. K239–V241 provides a ligand contact to ATP. Residues T291–K542 enclose the Glutamine amidotransferase type-1 domain. Position 352 (G352) interacts with L-glutamine. The Nucleophile; for glutamine hydrolysis role is filled by C379. Residues L380–Q383, E403, and R470 contribute to the L-glutamine site. Catalysis depends on residues H515 and E517.

Belongs to the CTP synthase family. Homotetramer.

The enzyme catalyses UTP + L-glutamine + ATP + H2O = CTP + L-glutamate + ADP + phosphate + 2 H(+). The catalysed reaction is L-glutamine + H2O = L-glutamate + NH4(+). It carries out the reaction UTP + NH4(+) + ATP = CTP + ADP + phosphate + 2 H(+). It functions in the pathway pyrimidine metabolism; CTP biosynthesis via de novo pathway; CTP from UDP: step 2/2. With respect to regulation, allosterically activated by GTP, when glutamine is the substrate; GTP has no effect on the reaction when ammonia is the substrate. The allosteric effector GTP functions by stabilizing the protein conformation that binds the tetrahedral intermediate(s) formed during glutamine hydrolysis. Inhibited by the product CTP, via allosteric rather than competitive inhibition. Its function is as follows. Catalyzes the ATP-dependent amination of UTP to CTP with either L-glutamine or ammonia as the source of nitrogen. Regulates intracellular CTP levels through interactions with the four ribonucleotide triphosphates. In Actinobacillus succinogenes (strain ATCC 55618 / DSM 22257 / CCUG 43843 / 130Z), this protein is CTP synthase.